The chain runs to 148 residues: Macrodomain Ter protein (148 aa).

This sequence belongs to the MatP family. Homodimer.

The protein localises to the cytoplasm. Required for spatial organization of the terminus region of the chromosome (Ter macrodomain) during the cell cycle. Prevents early segregation of duplicated Ter macrodomains during cell division. Binds specifically to matS, which is a 13 bp signature motif repeated within the Ter macrodomain. The chain is Macrodomain Ter protein from Haemophilus influenzae (strain 86-028NP).